The sequence spans 447 residues: GTPase Der (447 aa).

2 EngA-type G domains span residues 3 to 167 and 180 to 353; these read PVIA…HLAD and IRLA…ASAN. Residues 9–16, 56–60, 119–122, 186–193, 233–237, and 298–301 each bind GTP; these read GRPNVGKS, DTGGF, NKAE, DTAGL, and NKWD. One can recognise a KH-like domain in the interval 354 to 438; sequence RKMSTPVLTR…PMRIQMKSSH (85 aa).

It belongs to the TRAFAC class TrmE-Era-EngA-EngB-Septin-like GTPase superfamily. EngA (Der) GTPase family. As to quaternary structure, associates with the 50S ribosomal subunit.

Functionally, GTPase that plays an essential role in the late steps of ribosome biogenesis. The chain is GTPase Der from Polaromonas sp. (strain JS666 / ATCC BAA-500).